We begin with the raw amino-acid sequence, 237 residues long: Purine nucleoside phosphorylase DeoD-type (237 aa).

H4 serves as a coordination point for a purine D-ribonucleoside. Residues G20, R24, R43, and 87–90 (RVGT) contribute to the phosphate site. A purine D-ribonucleoside-binding positions include 179 to 181 (EME) and 203 to 204 (SD). The active-site Proton donor is D204.

It belongs to the PNP/UDP phosphorylase family. In terms of assembly, homohexamer; trimer of homodimers.

It catalyses the reaction a purine D-ribonucleoside + phosphate = a purine nucleobase + alpha-D-ribose 1-phosphate. The enzyme catalyses a purine 2'-deoxy-D-ribonucleoside + phosphate = a purine nucleobase + 2-deoxy-alpha-D-ribose 1-phosphate. Functionally, catalyzes the reversible phosphorolytic breakdown of the N-glycosidic bond in the beta-(deoxy)ribonucleoside molecules, with the formation of the corresponding free purine bases and pentose-1-phosphate. The protein is Purine nucleoside phosphorylase DeoD-type of Streptococcus pyogenes serotype M5 (strain Manfredo).